Consider the following 501-residue polypeptide: ATP synthase subunit alpha (501 aa).

Gly169–Thr176 contacts ATP.

This sequence belongs to the ATPase alpha/beta chains family. In terms of assembly, F-type ATPases have 2 components, CF(1) - the catalytic core - and CF(0) - the membrane proton channel. CF(1) has five subunits: alpha(3), beta(3), gamma(1), delta(1), epsilon(1). CF(0) has three main subunits: a(1), b(2) and c(9-12). The alpha and beta chains form an alternating ring which encloses part of the gamma chain. CF(1) is attached to CF(0) by a central stalk formed by the gamma and epsilon chains, while a peripheral stalk is formed by the delta and b chains.

It localises to the cell membrane. It catalyses the reaction ATP + H2O + 4 H(+)(in) = ADP + phosphate + 5 H(+)(out). In terms of biological role, produces ATP from ADP in the presence of a proton gradient across the membrane. The alpha chain is a regulatory subunit. The sequence is that of ATP synthase subunit alpha from Streptococcus mutans serotype c (strain ATCC 700610 / UA159).